The following is a 155-amino-acid chain: Small ribosomal subunit protein uS17 (155 aa).

Belongs to the universal ribosomal protein uS17 family. Component of the small ribosomal subunit. Mature ribosomes consist of a small (40S) and a large (60S) subunit. The 40S subunit contains about 32 different proteins and 1 molecule of RNA (18S). The 60S subunit contains 45 different proteins and 3 molecules of RNA (25S, 5.8S and 5S).

Its subcellular location is the cytoplasm. Its function is as follows. Component of the ribosome, a large ribonucleoprotein complex responsible for the synthesis of proteins in the cell. The small ribosomal subunit (SSU) binds messenger RNAs (mRNAs) and translates the encoded message by selecting cognate aminoacyl-transfer RNA (tRNA) molecules. The large subunit (LSU) contains the ribosomal catalytic site termed the peptidyl transferase center (PTC), which catalyzes the formation of peptide bonds, thereby polymerizing the amino acids delivered by tRNAs into a polypeptide chain. The nascent polypeptides leave the ribosome through a tunnel in the LSU and interact with protein factors that function in enzymatic processing, targeting, and the membrane insertion of nascent chains at the exit of the ribosomal tunnel. This Candida albicans (strain SC5314 / ATCC MYA-2876) (Yeast) protein is Small ribosomal subunit protein uS17.